The chain runs to 299 residues: MELKRENVLIEALPYMQEFYDSIMVIKVGGNAMVSTQIMEDIIKDIVLLRYVGIKPVIVHGGGPEITEKMERMGKKAEFFQGLRITDDETMEIARMVLVGNINTKIVSLIGIFGGKGVGFTGYDGRMILGHKQAVKRVLVDGVETEVDIGWVGESEVINPEILHIMLEKSYIPVISPIAVDAKGNALNINADTVAGDIAAALKAKKLILMTDVSGLLRNIKDPSSRISRVNLDQIDSLIEEGIISGGMIPKIKGAAVAVKSGVERAHVINGSVSHSMLLELFTDGGVGTMLYGPDHPPV.

Residues 62–63 (GG), Arg-84, and Asn-188 contribute to the substrate site.

The protein belongs to the acetylglutamate kinase family. ArgB subfamily.

It localises to the cytoplasm. The enzyme catalyses N-acetyl-L-glutamate + ATP = N-acetyl-L-glutamyl 5-phosphate + ADP. It functions in the pathway amino-acid biosynthesis; L-arginine biosynthesis; N(2)-acetyl-L-ornithine from L-glutamate: step 2/4. Its function is as follows. Catalyzes the ATP-dependent phosphorylation of N-acetyl-L-glutamate. This chain is Acetylglutamate kinase, found in Methanosarcina acetivorans (strain ATCC 35395 / DSM 2834 / JCM 12185 / C2A).